A 573-amino-acid polypeptide reads, in one-letter code: Patellin-1 (573 aa).

Disordered regions lie at residues 1-74 and 111-202; these read MAQE…SVKE and REFT…DGTK. Position 2 is an N-acetylalanine (Ala2). Residues 18-28 show a composition bias toward basic and acidic residues; it reads VKEKPITDKEV. Position 29 is a phosphothreonine (Thr29). A compositionally biased stretch (basic and acidic residues) spans 35-74; the sequence is AEKEEVAAPVSDEKAVPEKEVTPEKEAPAAEAEKSVSVKE. Residues 89 to 157 adopt a coiled-coil conformation; it reads AEEVQKKALE…TTEVKVEEEK (69 aa). The residue at position 118 (Thr118) is a Phosphothreonine. Composition is skewed to basic and acidic residues over residues 120–169 and 176–190; these read VKEE…EKSS and TKSE…EVTT. Ser195 is subject to Phosphoserine. Lys285 participates in a covalent cross-link: Glycyl lysine isopeptide (Lys-Gly) (interchain with G-Cter in ubiquitin). One can recognise a CRAL-TRIO domain in the interval 295 to 468; that stretch reads SGEEVSEFEK…KYGGLSKDTP (174 aa). Residues 471–572 form the GOLD domain; it reads EETITEAIVK…KKKVLYRFKT (102 aa).

The protein belongs to the patellin family. In terms of assembly, interacts with the deubiquitinating enzyme AMSH3. As to expression, expressed ubiquitously with higher levels in expanding roots and leaves (at protein level).

It localises to the membrane. It is found in the cytoplasm. Functionally, carrier protein that may be involved in membrane-trafficking events associated with cell plate formation during cytokinesis. Binds to some hydrophobic molecules and promotes their transfer between the different cellular sites. Binds to phosphoinositides with a preference for PtdIns(5)P, PtdIns(4,5)P2 and PtdIns(3)P. The protein is Patellin-1 (PATL1) of Arabidopsis thaliana (Mouse-ear cress).